The chain runs to 470 residues: ATP synthase subunit beta (470 aa).

Position 155 to 162 (155 to 162) interacts with ATP; that stretch reads GGAGVGKT.

Belongs to the ATPase alpha/beta chains family. In terms of assembly, F-type ATPases have 2 components, CF(1) - the catalytic core - and CF(0) - the membrane proton channel. CF(1) has five subunits: alpha(3), beta(3), gamma(1), delta(1), epsilon(1). CF(0) has three main subunits: a(1), b(2) and c(9-12). The alpha and beta chains form an alternating ring which encloses part of the gamma chain. CF(1) is attached to CF(0) by a central stalk formed by the gamma and epsilon chains, while a peripheral stalk is formed by the delta and b chains.

It is found in the cell membrane. The enzyme catalyses ATP + H2O + 4 H(+)(in) = ADP + phosphate + 5 H(+)(out). Functionally, produces ATP from ADP in the presence of a proton gradient across the membrane. The catalytic sites are hosted primarily by the beta subunits. This chain is ATP synthase subunit beta, found in Lacticaseibacillus casei (Lactobacillus casei).